A 290-amino-acid chain; its full sequence is ATP synthase gamma chain (290 aa).

Belongs to the ATPase gamma chain family. F-type ATPases have 2 components, CF(1) - the catalytic core - and CF(0) - the membrane proton channel. CF(1) has five subunits: alpha(3), beta(3), gamma(1), delta(1), epsilon(1). CF(0) has three main subunits: a, b and c.

It is found in the cell inner membrane. Produces ATP from ADP in the presence of a proton gradient across the membrane. The gamma chain is believed to be important in regulating ATPase activity and the flow of protons through the CF(0) complex. This is ATP synthase gamma chain from Chlorobium luteolum (strain DSM 273 / BCRC 81028 / 2530) (Pelodictyon luteolum).